Here is a 252-residue protein sequence, read N- to C-terminus: Transcriptional regulatory protein HptR (252 aa).

The Response regulatory domain occupies 3 to 118; sequence KVVICDDERI…QLEVILGRLV (116 aa). Asp55 is subject to 4-aspartylphosphate. An HTH araC/xylS-type domain is found at 153–250; the sequence is NQIVDQIKQS…QMAPSDYCKQ (98 aa). 2 consecutive DNA-binding regions (H-T-H motif) follow at residues 170–191 and 217–240; these read SDLI…KDHV and HYEI…KKYL.

Phosphorylated by HptS.

It localises to the cytoplasm. In terms of biological role, member of the two-component regulatory system HptS/HptR that regulates genes involved in hexose phosphate transport system in response to changes in extracellular phosphate sources. Activates uhpT expression to facilitate glucose-6-phosphate/G6P utilization by directly binding to its promoter. Antagonizes CcpA-dependent transcription of a subset of CcpA-regulated genes involved in antibiotic susceptibility. The protein is Transcriptional regulatory protein HptR (hptR) of Staphylococcus aureus (strain bovine RF122 / ET3-1).